We begin with the raw amino-acid sequence, 244 residues long: Large ribosomal subunit protein uL30w (244 aa).

Belongs to the universal ribosomal protein uL30 family.

The protein is Large ribosomal subunit protein uL30w (RPL7D) of Arabidopsis thaliana (Mouse-ear cress).